Consider the following 332-residue polypeptide: Ferredoxin--NADP reductase 1 (332 aa).

FAD contacts are provided by D35, K43, F48, V88, F123, D284, and T325.

Belongs to the ferredoxin--NADP reductase type 2 family. Homodimer. It depends on FAD as a cofactor.

It catalyses the reaction 2 reduced [2Fe-2S]-[ferredoxin] + NADP(+) + H(+) = 2 oxidized [2Fe-2S]-[ferredoxin] + NADPH. The chain is Ferredoxin--NADP reductase 1 from Listeria welshimeri serovar 6b (strain ATCC 35897 / DSM 20650 / CCUG 15529 / CIP 8149 / NCTC 11857 / SLCC 5334 / V8).